The following is a 214-amino-acid chain: NAD(P)H-quinone oxidoreductase subunit 5, chloroplastic (214 aa).

Helical transmembrane passes span 84-104 (LFPL…GIPF) and 152-172 (SLAI…YSFF).

It belongs to the complex I subunit 5 family. In terms of assembly, NDH is composed of at least 16 different subunits, 5 of which are encoded in the nucleus.

It is found in the plastid. The protein resides in the chloroplast thylakoid membrane. It catalyses the reaction a plastoquinone + NADH + (n+1) H(+)(in) = a plastoquinol + NAD(+) + n H(+)(out). The catalysed reaction is a plastoquinone + NADPH + (n+1) H(+)(in) = a plastoquinol + NADP(+) + n H(+)(out). In terms of biological role, NDH shuttles electrons from NAD(P)H:plastoquinone, via FMN and iron-sulfur (Fe-S) centers, to quinones in the photosynthetic chain and possibly in a chloroplast respiratory chain. The immediate electron acceptor for the enzyme in this species is believed to be plastoquinone. Couples the redox reaction to proton translocation, and thus conserves the redox energy in a proton gradient. The sequence is that of NAD(P)H-quinone oxidoreductase subunit 5, chloroplastic (ndhF) from Brachypodium pinnatum (Tor grass).